We begin with the raw amino-acid sequence, 62 residues long: UPF0339 protein Atu0232 (62 aa).

Belongs to the UPF0339 family.

The polypeptide is UPF0339 protein Atu0232 (Agrobacterium fabrum (strain C58 / ATCC 33970) (Agrobacterium tumefaciens (strain C58))).